A 244-amino-acid polypeptide reads, in one-letter code: Phosphoadenosine 5'-phosphosulfate reductase (244 aa).

Residue cysteine 239 is the Nucleophile; cysteine thiosulfonate intermediate of the active site.

The protein belongs to the PAPS reductase family. CysH subfamily.

The protein resides in the cytoplasm. The catalysed reaction is [thioredoxin]-disulfide + sulfite + adenosine 3',5'-bisphosphate + 2 H(+) = [thioredoxin]-dithiol + 3'-phosphoadenylyl sulfate. The protein operates within sulfur metabolism; hydrogen sulfide biosynthesis; sulfite from sulfate: step 3/3. Functionally, catalyzes the formation of sulfite from phosphoadenosine 5'-phosphosulfate (PAPS) using thioredoxin as an electron donor. In Citrobacter koseri (strain ATCC BAA-895 / CDC 4225-83 / SGSC4696), this protein is Phosphoadenosine 5'-phosphosulfate reductase.